Consider the following 128-residue polypeptide: Azurin (128 aa).

Residues Ala-1 to Lys-128 enclose the Plastocyanin-like domain. The cysteines at positions 3 and 26 are disulfide-linked. Positions 46, 112, 117, and 121 each coordinate Cu cation.

The protein resides in the periplasm. Its function is as follows. Transfers electrons from cytochrome c551 to cytochrome oxidase. The chain is Azurin from Pseudomonas aeruginosa.